A 536-amino-acid chain; its full sequence is Nuclear hormone receptor family member nhr-7 (536 aa).

Positions 6 to 82 (NRICAVCGDT…VGMNPDYVRP (77 aa)) form a DNA-binding region, nuclear receptor. 2 consecutive NR C4-type zinc fingers follow at residues 9–29 (CAVC…CFGC) and 46–70 (CRFE…FRKC). Residues 155–378 (ADRSLARKTG…PFHKILTDII (224 aa)) enclose the NR LBD domain. The segment at 427–465 (SPCQISAPPPPQQQYTDYSQMPSTSSYPANSSPFQSPYR) is disordered. Polar residues predominate over residues 439–465 (QQYTDYSQMPSTSSYPANSSPFQSPYR).

Belongs to the nuclear hormone receptor family.

It is found in the nucleus. Orphan nuclear receptor. This Caenorhabditis elegans protein is Nuclear hormone receptor family member nhr-7 (nhr-7).